The following is a 379-amino-acid chain: Cytochrome b (379 aa).

4 consecutive transmembrane segments (helical) span residues 33–53, 77–98, 113–133, and 178–198; these read FGSL…FLAM, WLIR…FIHV, WNIG…GYVL, and FFAF…VHLL. His-83 and His-97 together coordinate heme b. The heme b site is built by His-182 and His-196. His-201 is an a ubiquinone binding site. 4 helical membrane passes run 226 to 246, 288 to 308, 320 to 340, and 347 to 367; these read IKDL…ALFF, LGGV…PLLN, VTQT…WIGG, and FTMI…VLMP.

The protein belongs to the cytochrome b family. In terms of assembly, the cytochrome bc1 complex contains 11 subunits: 3 respiratory subunits (MT-CYB, CYC1 and UQCRFS1), 2 core proteins (UQCRC1 and UQCRC2) and 6 low-molecular weight proteins (UQCRH/QCR6, UQCRB/QCR7, UQCRQ/QCR8, UQCR10/QCR9, UQCR11/QCR10 and a cleavage product of UQCRFS1). This cytochrome bc1 complex then forms a dimer. Heme b serves as cofactor.

The protein localises to the mitochondrion inner membrane. Component of the ubiquinol-cytochrome c reductase complex (complex III or cytochrome b-c1 complex) that is part of the mitochondrial respiratory chain. The b-c1 complex mediates electron transfer from ubiquinol to cytochrome c. Contributes to the generation of a proton gradient across the mitochondrial membrane that is then used for ATP synthesis. The chain is Cytochrome b (MT-CYB) from Akodon iniscatus (Intelligent grass mouse).